The chain runs to 221 residues: Ribonuclease S-2 (221 aa).

Residues 1 to 20 (MIYIFTMVFSLNVLILSSSA) form the signal peptide. Gln31 serves as a coordination point for RNA. Residues Cys37 and Cys44 are joined by a disulfide bond. RNA-binding positions include His55, 91–92 (NV), Phe101, 104–105 (KQ), and 108–109 (KH). His55 acts as the Proton donor in catalysis. Cys70 and Cys112 are oxidised to a cystine. Asn91 is a glycosylation site (N-linked (GlcNAc...) asparagine). Gln105 is an active-site residue. His109 acts as the Proton acceptor in catalysis. Asn137, Asn153, and Asn195 each carry an N-linked (GlcNAc...) asparagine glycan. 2 disulfides stabilise this stretch: Cys176–Cys214 and Cys191–Cys202.

It belongs to the RNase T2 family. N-linked core structure at Asn-91, Asn-137, and Asn-153 contains xylose and at Asn-195 contains xylose and fucose.

The protein resides in the secreted. It localises to the extracellular space. The catalysed reaction is a ribonucleotidyl-ribonucleotide-RNA + H2O = a 3'-end 3'-phospho-ribonucleotide-RNA + a 5'-end dephospho-ribonucleoside-RNA + H(+). Functionally, self-incompatibility (SI) is the inherited ability of a flowering plant to prevent self-fertilization by discriminating between self and non-self pollen during pollination. In many species, self-incompatibility is controlled by the single, multiallelic locus S. The chain is Ribonuclease S-2 from Pyrus pyrifolia (Chinese pear).